Reading from the N-terminus, the 791-residue chain is RAS guanyl-releasing protein 1 (791 aa).

One can recognise an N-terminal Ras-GEF domain in the interval 49-172 (LGKLSKGASL…RLIDTAQINS (124 aa)). The ras exchanger motif region; required for transforming activity stretch occupies residues 53 to 106 (SKGASLDDLIQMCIQAFDLDGNMGQNSELLQIMLTMHGFLLPSTELLMKLRTLY). A Ras-GEF domain is found at 201-432 (EPQELAEHLT…YELSYAREPR (232 aa)). EF-hand domains follow at residues 466–501 (HVQR…FPFS) and 502–528 (FCVM…ASSI). Residues Asp-479, Asp-481, Asp-483, Tyr-485, Glu-490, Asp-506, Asp-508, Glu-510, and Glu-517 each coordinate Ca(2+). The Phorbol-ester/DAG-type zinc finger occupies 537–587 (LHNFQETTYLRPTFCDNCAGFLWGVIKQGYRCKDCGMNCHKQCKELVVFEC). The span at 683–695 (QVPSPQRSRTPGL) shows a compositional bias: polar residues. Residues 683 to 715 (QVPSPQRSRTPGLTSHLPISPMPSPCPSPVPTR) are disordered. Positions 702 to 712 (SPMPSPCPSPV) are enriched in pro residues. Residues 728–785 (IRKARAELRGGKAGIQELEKEKALLKEENTTLKIQLKDAQRRVETLRAELRKYVLDSD) adopt a coiled-coil conformation.

This sequence belongs to the RASGRP family.

The protein resides in the cytoplasm. It is found in the cytosol. It localises to the cell membrane. The protein localises to the golgi apparatus membrane. Its subcellular location is the endoplasmic reticulum membrane. Its activity is regulated as follows. Regulated by F-actin polymerization and probably by calcium. Its function is as follows. Functions as a diacylglycerol (DAG)-regulated nucleotide exchange factor specifically activating Ras through the exchange of bound GDP for GTP. The sequence is that of RAS guanyl-releasing protein 1 (rasgrp1) from Xenopus tropicalis (Western clawed frog).